A 1697-amino-acid polypeptide reads, in one-letter code: MRQIVTGVIHQTTQSQQIPNVINSNQIQFSNEPMVVGSIEDFDIDSEVPPLAINLQRSINNNNNNNNNNNNNNNNNNNNNNNNNNNNTQPCTTVFLDRDSCVNVKATIDLLKEQLEFTIKDLIDFKENYDKLESTEQFKQWSNLIKNIKENSLNNSNIYLTIPTTQNLINNNNNNNNNNNNNNNNNNNNNNNNNNNVIIPSASTENKEENDNNNSNNNNNINLSPDSSITKDINITENKITEIKTTETKETSTGTSPLEKSPSKGFIISPKKPEEENEIEGETINNIAITNYTQGPSMLTLMKKKLENIKKNNNNNNNNGNGNNNSNNNNSNSNNNNNGISPSSSPPSHLNGNNNNNNSNNTNSNNTTNATTNSVGFSITMTNSNSLSVSKRMNKFKSWTSSKPTSSSIGFASSPQNNGKPLNISGSSRFFTSRQDSKIDLLKSPSSSPPTQSDIFNENNNNNNNNNNNNNNNNNNNNNNNNNNNNNNNNEELINNNNNNNNDENYKIEETEESLKELLEKEKLENEEREKILKERNEIDNLKKKNHLSKGYFMRACNASNDDGLEEEDIPLQDEHWETNVIVLLPCRHHVKVPGSSSSSIDSIRQLAWASGKMQGHLNLEKDEKFFTLRWCNKDVVFDQDTPLGHLIQYNLNYNNPTQKPTNIKLELVLEDELCKERLVDLQSLEINNGRPSIWKSHIDDVLSFNRKLRELAMLAKPQSNVPAARLTPYPPPKTIPEFFVIRVHLFKNQTKSLRCANNHTAFSLMTILSEKLKNTTPFDPTQYRFLITGINQYVDPNVPLLSVEYIVEKIKRKGEIDLTMVELLSLGLIIQQQQQQQQQQQQQQQQQQIENIDDENILKLNNGILNVLSKIEKPIREKDNCISSLTVTENLQVRLLHAHEIFASKASEIIGTDSPSIQLFIEAAVYFGGELLATQSSKLVSFQDTVVWNEWVNIPLAVSNIPNGARMCLGLNARYRGDIFNIGWVGHRLFDSKGILNTFAPFSLLLWPGKINPIGTCVDNLESKDQAIIIAFEFKDYVVPKTIHYEDDLIELISKDENGNELPVVTMEEMDRVEQIILQDPLYSLNKEERLLIWKSRYFCHTKPQALSKLLQSVEWTNYKQVGEAFQLLKIWPTLSAVDALELLDPKFADCVEIREYAVKCLDQMSDYELEIYMLQLVQAIKHDVFHNSVLSLFLIGRVWQNMQVLGHPFFWHLRADIDNQEVCERFRVLSSGFLRYAPTQLMESFKREITTLRILENLAKRVKEVPYEKRKQYVENNLREEQSFPTELFVPFDPSIRILNIIPEKCKSMDSAKVPLWVTFKNADPFAPPLQMIAKTGDDLRQDILTLQLLRLMDHMWKSQDLDLHMTIYRCIATGMGTGLIEVVPNSETAARIQAGAGGVSGAFKQTPIANWLKNHNQTENSYQKAVSKFTLSCAGYCVATYVLGIGDRHNDNIMVDIHGHLFHIDFGHFLGNFKTFAGFQREKAPFVLTPDFVYVIGGKDSPNFAFFVDICCKAFNIIRSNAHVFINMFELMLSTGIPELRSENDIVYLRDKFRLDLTDAEASEYFKKLIHESIGTLTTTINFAIHIMAHRKNLVSGNSAPKIGSASSLNLNKNKPSSQSKLDLSRSDLSRSDSSRSDSSRLDLSRSDKKNNKDNKEKEKEKEKEKEKENNDNNDKDNNNNSNNDTEKENSIDK.

Disordered regions lie at residues 57-91 (RSINNNNNNNNNNNNNNNNNNNNNNNNNNNNTQPC), 169-229 (INNN…DSSI), 244-279 (KTTETKETSTGTSPLEKSPSKGFIISPKKPEEENEI), 310-376 (KKNN…NSVG), 398-428 (SWTSSKPTSSSIGFASSPQNNGKPLNISGSS), and 440-504 (DLLK…NNDE). Composition is skewed to low complexity over residues 60-87 (NNNNNNNNNNNNNNNNNNNNNNNNNNNN), 170-196 (NNNNNNNNNNNNNNNNNNNNNNNNNNN), and 212-222 (NNNSNNNNNIN). 2 stretches are compositionally biased toward low complexity: residues 312–374 (NNNN…TTNS) and 398–408 (SWTSSKPTSSS). Composition is skewed to polar residues over residues 409–428 (IGFASSPQNNGKPLNISGSS) and 444–456 (SPSSSPPTQSDIF). Residues 457 to 503 (NENNNNNNNNNNNNNNNNNNNNNNNNNNNNNNNNEELINNNNNNNND) are compositionally biased toward low complexity. One can recognise a PI3K-RBD domain in the interval 737–823 (PEFFVIRVHL…KGEIDLTMVE (87 aa)). The region spanning 888–1036 (VTENLQVRLL…QAIIIAFEFK (149 aa)) is the C2 PI3K-type domain. The region spanning 1060–1238 (GNELPVVTME…RVLSSGFLRY (179 aa)) is the PIK helical domain. A PI3K/PI4K catalytic domain is found at 1304–1581 (IPEKCKSMDS…LIHESIGTLT (278 aa)). The interval 1310 to 1316 (SMDSAKV) is G-loop. The catalytic loop stretch occupies residues 1447 to 1455 (GIGDRHNDN). The activation loop stretch occupies residues 1466–1492 (HIDFGHFLGNFKTFAGFQREKAPFVLT). A compositionally biased stretch (low complexity) spans 1609–1625 (ASSLNLNKNKPSSQSKL). Residues 1609–1697 (ASSLNLNKNK…DTEKENSIDK (89 aa)) form a disordered region. A run of 5 repeats spans residues 1622–1626 (QSKLD), 1627–1631 (LSRSD), 1632–1636 (LSRSD), 1642–1646 (SSRLD), and 1647–1651 (LSRSD). Residues 1622–1651 (QSKLDLSRSDLSRSDSSRSDSSRLDLSRSD) form a 5 X 5 AA approximate repeats region. 2 stretches are compositionally biased toward basic and acidic residues: residues 1626 to 1681 (DLSR…DKDN) and 1688 to 1697 (DTEKENSIDK). The interval 1659–1672 (KEKEKEKEKEKEKE) is 7 X 2 AA tandem repeats of K-E.

It belongs to the PI3/PI4-kinase family.

It catalyses the reaction a 1,2-diacyl-sn-glycero-3-phospho-(1D-myo-inositol) + ATP = a 1,2-diacyl-sn-glycero-3-phospho-(1D-myo-inositol-3-phosphate) + ADP + H(+). The chain is Phosphatidylinositol 3-kinase 3 (pikC) from Dictyostelium discoideum (Social amoeba).